Reading from the N-terminus, the 503-residue chain is Putative (R)-citramalate synthase CimA (503 aa).

The 249-residue stretch at isoleucine 9–tyrosine 257 folds into the Pyruvate carboxyltransferase domain.

The protein belongs to the alpha-IPM synthase/homocitrate synthase family. As to quaternary structure, homodimer.

It carries out the reaction pyruvate + acetyl-CoA + H2O = (3R)-citramalate + CoA + H(+). It participates in amino-acid biosynthesis; L-isoleucine biosynthesis; 2-oxobutanoate from pyruvate: step 1/3. Its function is as follows. Catalyzes the condensation of pyruvate and acetyl-coenzyme A to form (R)-citramalate. In Methanoculleus marisnigri (strain ATCC 35101 / DSM 1498 / JR1), this protein is Putative (R)-citramalate synthase CimA.